Reading from the N-terminus, the 681-residue chain is MQKYHFTGLDCPDCANKLESALNKQSYVQEARVVFNTNTLYLKTQDMPKALALIKQLEPDMELSEQVQSEAKPSAIPLLLSVVLYLIAVATIHFSAQNWALHLSYALLAGVYLVAGKDVFLGALRAIRNKQFFDENTLMLSATIAAFGVGAHEEAVSIMVFYSAGEFLQQLAIARSKQSLHALLDVAPNHAVRKVGQELQEVEPSALAIGDVVIVKVGEKIPTDGVVLRGESLLDQKALTGESLPVNVKEHSAVLGGSINLKGVLEIQVSKLYADSSVAKIVDLVSNAVSQKSQTEKFITTFARYYTPAVFAIALLIALVPPLLGHGDFDTWIYRGLFALMVSCPCALVISVPLGYFGGVGAASRAGILIKSVQTLEALSQVKNIAFDKTGTLSKGEFNVIDVVPIAPFSKEDVLQHATCAQILSTHPIAISIQKAYKRQCQHEVKDYQEIGGLGVQASCHSHLIIAGNDKMLHKYNIPHDTCSLEGTIVHVAVDGKHIGYIVVADTLKDNAKECLDGLKHAGIEHMCILSGDHEYSTKRVAKELDCPYYANLLPEDKLNAFKDFQAQHAHKSMFVGDGINDAPTLARADVSMSMGSASQISKESADIVITNNSLESVLKVFKIAKKTKRIIIENIIFALAIKAMFIVLGLSGDASLWEAVLGDVGVTLIALANSMRTMRI.

The 66-residue stretch at 1-66 (MQKYHFTGLD…LEPDMELSEQ (66 aa)) folds into the HMA domain. The Cytoplasmic portion of the chain corresponds to 1–72 (MQKYHFTGLD…LSEQVQSEAK (72 aa)). Cd(2+) contacts are provided by Cys11 and Cys14. 2 residues coordinate Co(2+): Cys11 and Cys14. Zn(2+) is bound by residues Cys11 and Cys14. A helical transmembrane segment spans residues 73–92 (PSAIPLLLSVVLYLIAVATI). Over 93 to 102 (HFSAQNWALH) the chain is Extracellular. Residues 103–124 (LSYALLAGVYLVAGKDVFLGAL) traverse the membrane as a helical segment. Residues 125–131 (RAIRNKQ) are Cytoplasmic-facing. A helical transmembrane segment spans residues 132 to 151 (FFDENTLMLSATIAAFGVGA). The Extracellular portion of the chain corresponds to 152–154 (HEE). Residues 155–174 (AVSIMVFYSAGEFLQQLAIA) form a helical membrane-spanning segment. The Cytoplasmic segment spans residues 175-308 (RSKQSLHALL…ITTFARYYTP (134 aa)). Residues 309–327 (AVFAIALLIALVPPLLGHG) form a helical membrane-spanning segment. Topologically, residues 328–332 (DFDTW) are extracellular. The helical transmembrane segment at 333 to 350 (IYRGLFALMVSCPCALVI) threads the bilayer. Topologically, residues 351–630 (SVPLGYFGGV…VFKIAKKTKR (280 aa)) are cytoplasmic. Asp388 functions as the 4-aspartylphosphate intermediate in the catalytic mechanism. Asp578 and Asp582 together coordinate Mg(2+). The helical transmembrane segment at 631 to 652 (IIIENIIFALAIKAMFIVLGLS) threads the bilayer. The Extracellular portion of the chain corresponds to 653–660 (GDASLWEA). The chain crosses the membrane as a helical span at residues 661-676 (VLGDVGVTLIALANSM). Topologically, residues 677 to 681 (RTMRI) are cytoplasmic.

It belongs to the cation transport ATPase (P-type) (TC 3.A.3) family. Type IB subfamily.

The protein resides in the cell membrane. The catalysed reaction is Zn(2+)(in) + ATP + H2O = Zn(2+)(out) + ADP + phosphate + H(+). It catalyses the reaction Cd(2+)(in) + ATP + H2O = Cd(2+)(out) + ADP + phosphate + H(+). Couples the hydrolysis of ATP with the transport of cadmium, zinc and cobalt out of the cell. The polypeptide is Cadmium, zinc and cobalt-transporting ATPase (cadA) (Helicobacter felis).